The following is a 281-amino-acid chain: Bis(5'-nucleosyl)-tetraphosphatase, symmetrical (281 aa).

Belongs to the Ap4A hydrolase family.

The catalysed reaction is P(1),P(4)-bis(5'-adenosyl) tetraphosphate + H2O = 2 ADP + 2 H(+). Its function is as follows. Hydrolyzes diadenosine 5',5'''-P1,P4-tetraphosphate to yield ADP. This chain is Bis(5'-nucleosyl)-tetraphosphatase, symmetrical, found in Pectobacterium carotovorum subsp. carotovorum (strain PC1).